Here is a 237-residue protein sequence, read N- to C-terminus: Large ribosomal subunit protein uL1 (237 aa).

The protein belongs to the universal ribosomal protein uL1 family. In terms of assembly, part of the 50S ribosomal subunit.

Binds directly to 23S rRNA. The L1 stalk is quite mobile in the ribosome, and is involved in E site tRNA release. Its function is as follows. Protein L1 is also a translational repressor protein, it controls the translation of the L11 operon by binding to its mRNA. This chain is Large ribosomal subunit protein uL1, found in Dehalococcoides mccartyi (strain ATCC BAA-2266 / KCTC 15142 / 195) (Dehalococcoides ethenogenes (strain 195)).